The chain runs to 133 residues: Sigma factor-binding protein Crl (133 aa).

An essential for activity region spans residues 99–122; the sequence is TLDDFYVKLTKFVKEDCQLDLQAS.

The protein belongs to the Crl family.

The protein localises to the cytoplasm. Functionally, binds to the sigma-S subunit of RNA polymerase, activating expression of sigma-S-regulated genes. Stimulates RNA polymerase holoenzyme formation and may bind to several other sigma factors, such as sigma-70 and sigma-32. This Photobacterium profundum (strain SS9) protein is Sigma factor-binding protein Crl.